A 597-amino-acid chain; its full sequence is Aspartate--tRNA ligase (597 aa).

Glu180 provides a ligand contact to L-aspartate. The aspartate stretch occupies residues 204-207 (QLFK). Arg226 is an L-aspartate binding site. ATP-binding positions include 226–228 (RDE) and Gln235. His454 contributes to the L-aspartate binding site. ATP is bound at residue Glu488. Residue Arg495 participates in L-aspartate binding. Position 540 to 543 (540 to 543 (GLDR)) interacts with ATP.

This sequence belongs to the class-II aminoacyl-tRNA synthetase family. Type 1 subfamily. Homodimer.

The protein resides in the cytoplasm. It catalyses the reaction tRNA(Asp) + L-aspartate + ATP = L-aspartyl-tRNA(Asp) + AMP + diphosphate. Catalyzes the attachment of L-aspartate to tRNA(Asp) in a two-step reaction: L-aspartate is first activated by ATP to form Asp-AMP and then transferred to the acceptor end of tRNA(Asp). The sequence is that of Aspartate--tRNA ligase from Clostridium perfringens (strain SM101 / Type A).